The sequence spans 625 residues: MKSVPLISGGLSLFLSACSGGGGSFDVDDVSNPSSSKPRYQDDTSNQRKKSNLEKLSIPSLGGGMKLVAQNLRGREPSLLNEDGYIIFSSLSKIEDDFKKENQSQEPTIGSIDEPSETNSPQNHHGQQYVYSGLYYIQSWRNFSNGKFYSGYYGYAYYFGKQTATTLPVNGEATYKGTWSFITATERGKNYSLFSNSSGQGYSRRSAISEDIDLENDQNNGETGLISQFSADFGTKKLKGELFYTKRKTNNQNYEKKKLYDIDANIYSNRFRGKVKPTEKDSEEHPFTREGTLEGGFYGPNGEELGGKFLAGDKKVFGVFSAKETEETKQKTLPKETLIDGKLTTFSTKKPDATTSTTANAKTDATTNAENFTTKDISSFGEADYLLIDNYPVPLLPETENSGDFATSKHYEVRDKTYKVEACCKNLSYVKFGMYYEDNKKNNKNETEQYHQFLLGLRTASSKIPTTGNVKYRGSWFGYISDGETSYSTTGDKRQDKNAVAEFDVNFAEKTLKGSLKRADSQNPVFSIEANFKNGGNAFTGTATAKDLVIDGKNSQTKNTPINITTKVNGAFYGPNASELGGYFTYNGKNPTDKNSPTASSPSNSEKARAAVVFGAKKQVETNNK.

The signal sequence occupies residues 1 to 17 (MKSVPLISGGLSLFLSA). Residue Cys18 is the site of N-palmitoyl cysteine attachment. Cys18 carries S-diacylglycerol cysteine lipidation. 4 disordered regions span residues 25–52 (FDVD…KKSN), 99–125 (KKEN…QNHH), 275–298 (VKPT…GGFY), and 584–610 (FTYN…KARA). The segment covering 276–292 (KPTEKDSEEHPFTREGT) has biased composition (basic and acidic residues). Positions 587–605 (NGKNPTDKNSPTASSPSNS) are enriched in polar residues.

This sequence belongs to the TbpB family.

It is found in the cell outer membrane. The protein resides in the cell surface. In terms of biological role, haemophilus acquires iron by extracting it from serum transferrin (TF) in its human host. Acts as a transferrin receptor and is required for transferrin utilization. The sequence is that of Transferrin-binding protein B (tbpB) from Haemophilus influenzae (strain ATCC 51907 / DSM 11121 / KW20 / Rd).